Consider the following 115-residue polypeptide: Mitochondrial zinc maintenance protein 1, mitochondrial (115 aa).

A mitochondrion-targeting transit peptide spans 1–23; the sequence is MTTSTAAAAKSAYRQLLRSTRVV.

It belongs to the complex I LYR family. MZM1 subfamily. Interacts with RIP1.

The protein localises to the mitochondrion matrix. Assembly factor required for Rieske Fe-S protein RIP1 incorporation into the cytochrome b-c1 (CIII) complex. Functions as a chaperone, binding to this subunit within the mitochondrial matrix and stabilizing it prior to its translocation and insertion into the late CIII dimeric intermediate within the mitochondrial inner membrane. Modulates the mitochondrial matrix zinc pool. The chain is Mitochondrial zinc maintenance protein 1, mitochondrial (MZM1) from Penicillium rubens (strain ATCC 28089 / DSM 1075 / NRRL 1951 / Wisconsin 54-1255) (Penicillium chrysogenum).